A 369-amino-acid chain; its full sequence is Transaldolase (369 aa).

The active-site Schiff-base intermediate with substrate is Lys-140.

Belongs to the transaldolase family. Type 2 subfamily.

Its subcellular location is the cytoplasm. It carries out the reaction D-sedoheptulose 7-phosphate + D-glyceraldehyde 3-phosphate = D-erythrose 4-phosphate + beta-D-fructose 6-phosphate. It functions in the pathway carbohydrate degradation; pentose phosphate pathway; D-glyceraldehyde 3-phosphate and beta-D-fructose 6-phosphate from D-ribose 5-phosphate and D-xylulose 5-phosphate (non-oxidative stage): step 2/3. Functionally, transaldolase is important for the balance of metabolites in the pentose-phosphate pathway. The protein is Transaldolase of Parafrankia sp. (strain EAN1pec).